Reading from the N-terminus, the 430-residue chain is Divergent protein kinase domain 2A (430 aa).

A signal peptide spans 1-35 (MWRLVPPKLGRLSRSLKLAALGSLLVLMVLHSPSL).

This sequence belongs to the DIPK family.

It localises to the cytoplasmic vesicle. The protein localises to the COPI-coated vesicle. Its subcellular location is the golgi apparatus. The protein resides in the secreted. May play a role in cardiomyocyte proliferation through paracrine signaling and activation of the PPI3K-AKT-CDK7 signaling cascade. This Homo sapiens (Human) protein is Divergent protein kinase domain 2A.